The following is a 1086-amino-acid chain: DNA polymerase delta catalytic subunit (1086 aa).

Positions Met-1 to Ala-64 are disordered. Residues Glu-29–Ser-58 show a composition bias toward basic and acidic residues. Zn(2+) is bound by residues Cys-993, Cys-996, Cys-1008, and Cys-1011. A CysA-type zinc finger spans residues Cys-993 to Cys-1011. Residues Cys-1040, Cys-1043, Cys-1053, and Cys-1058 each coordinate [4Fe-4S] cluster. Positions Cys-1040 to Cys-1058 match the CysB motif motif.

It belongs to the DNA polymerase type-B family. In terms of assembly, heterotetramer that consist of the pol3, cdc1, cdc27 and cdm1 subunits. The pol3 subunit contains the polymerase active site and most likely the active site for the 3'-5' exonuclease activity. The cofactor is [4Fe-4S] cluster.

The protein resides in the nucleus. The enzyme catalyses DNA(n) + a 2'-deoxyribonucleoside 5'-triphosphate = DNA(n+1) + diphosphate. Functionally, catalytic component of DNA polymerase delta (DNA polymerase III) which participates in chromosomal DNA replication. Required during synthesis of the lagging DNA strands at the replication fork, binds at/or near replication origins and moves along DNA with the replication fork. Participates in leading strand synthesis during replication initiation and termination. Has 3'-5' proofreading exonuclease activity that corrects errors arising during DNA replication. This chain is DNA polymerase delta catalytic subunit (pol3), found in Schizosaccharomyces pombe (strain 972 / ATCC 24843) (Fission yeast).